The primary structure comprises 438 residues: Xylose isomerase (438 aa).

Active-site residues include His-100 and Asp-103. Residues Glu-231, Glu-267, His-270, Asp-295, Asp-306, Asp-308, and Asp-338 each contribute to the Mg(2+) site.

It belongs to the xylose isomerase family. Homotetramer. The cofactor is Mg(2+).

It localises to the cytoplasm. It catalyses the reaction alpha-D-xylose = alpha-D-xylulofuranose. This is Xylose isomerase (xylA) from Thermoanaerobacter pseudethanolicus (strain ATCC 33223 / 39E) (Clostridium thermohydrosulfuricum).